The chain runs to 386 residues: Patatin-04/09 (386 aa).

The first 23 residues, 1–23 (MATTKSFLILFFMILATTSSTCA), serve as a signal peptide directing secretion. A PNPLA domain is found at 32 to 229 (LSIDGGGIKG…TVGDPALLSL (198 aa)). Residues 36 to 41 (GGGIKG) carry the GXGXXG motif. Residues 75–79 (GTSTG) carry the GXSXG motif. Ser77 acts as the Nucleophile in catalysis. An N-linked (GlcNAc...) asparagine glycan is attached at Asn115. Catalysis depends on Asp215, which acts as the Proton acceptor. The short motif at 215–217 (DGG) is the DGA/G element. A coiled-coil region spans residues 321–384 (ENALNGTTTE…DRKKLRANKA (64 aa)). Asn325 carries N-linked (GlcNAc...) asparagine glycosylation.

The protein belongs to the patatin family. Tuber.

The protein resides in the vacuole. Probable lipolytic acyl hydrolase (LAH), an activity which is thought to be involved in the response of tubers to pathogens. The sequence is that of Patatin-04/09 from Solanum tuberosum (Potato).